The primary structure comprises 259 residues: Submandibular glandular kallikrein-9 (259 aa).

An N-terminal signal peptide occupies residues 1 to 18 (MWFLILFLALSLGQIDAA). The propeptide at 19 to 24 (PPGQSR) is activation peptide. A Peptidase S1 domain is found at 25 to 256 (VVGGYNCETN…FTSWIKKVMK (232 aa)). 5 cysteine pairs are disulfide-bonded: cysteine 31–cysteine 171, cysteine 48–cysteine 64, cysteine 150–cysteine 217, cysteine 182–cysteine 196, and cysteine 207–cysteine 232. Histidine 63 serves as the catalytic Charge relay system. Asparagine 106 is a glycosylation site (N-linked (GlcNAc...) asparagine). The active-site Charge relay system is aspartate 118. Residue serine 211 is the Charge relay system of the active site.

The protein belongs to the peptidase S1 family. Kallikrein subfamily. Heterodimer of a light chain and heavy chain linked by a disulfide bond.

The enzyme catalyses Preferential cleavage of Arg-|-Xaa bonds in small molecule substrates. Highly selective action to release kallidin (lysyl-bradykinin) from kininogen involves hydrolysis of Met-|-Xaa or Leu-|-Xaa.. Glandular kallikreins cleave Met-Lys and Arg-Ser bonds in kininogen to release Lys-bradykinin. This enzyme has a vasoconstrictor activity. KLK-9 has both a chymotrypsin-like and a trypsin-like properties. The polypeptide is Submandibular glandular kallikrein-9 (Klk9) (Rattus norvegicus (Rat)).